The chain runs to 149 residues: Endoribonuclease YbeY (149 aa).

Residues His-113, His-117, and His-123 each coordinate Zn(2+).

Belongs to the endoribonuclease YbeY family. It depends on Zn(2+) as a cofactor.

Its subcellular location is the cytoplasm. Functionally, single strand-specific metallo-endoribonuclease involved in late-stage 70S ribosome quality control and in maturation of the 3' terminus of the 16S rRNA. The sequence is that of Endoribonuclease YbeY from Saccharophagus degradans (strain 2-40 / ATCC 43961 / DSM 17024).